A 485-amino-acid chain; its full sequence is Dynein axonemal assembly factor 3 (485 aa).

This sequence belongs to the DNAAF3 family.

It is found in the cytoplasm. It localises to the dynein axonemal particle. Required for the assembly of axonemal inner and outer dynein arms. Involved in preassembly of dyneins into complexes before their transport into cilia. This Xenopus laevis (African clawed frog) protein is Dynein axonemal assembly factor 3 (dnaaf3).